The primary structure comprises 419 residues: Phospho-N-acetylmuramoyl-pentapeptide-transferase (419 aa).

Helical transmembrane passes span 22–42 (YVSF…TVIG), 72–92 (TPTM…LLLA), 99–119 (ILLM…DDYI), 135–155 (IIGQ…NPAV), 208–228 (VLFG…FISN), 238–258 (GLAT…AYVS), 278–298 (LTIF…YNAY), 303–323 (FMGD…ALII), 328–348 (LLPI…IQVF), and 396–416 (KITV…IATL).

Belongs to the glycosyltransferase 4 family. MraY subfamily. Requires Mg(2+) as cofactor.

Its subcellular location is the cell inner membrane. It catalyses the reaction UDP-N-acetyl-alpha-D-muramoyl-L-alanyl-gamma-D-glutamyl-meso-2,6-diaminopimeloyl-D-alanyl-D-alanine + di-trans,octa-cis-undecaprenyl phosphate = di-trans,octa-cis-undecaprenyl diphospho-N-acetyl-alpha-D-muramoyl-L-alanyl-D-glutamyl-meso-2,6-diaminopimeloyl-D-alanyl-D-alanine + UMP. The protein operates within cell wall biogenesis; peptidoglycan biosynthesis. In terms of biological role, catalyzes the initial step of the lipid cycle reactions in the biosynthesis of the cell wall peptidoglycan: transfers peptidoglycan precursor phospho-MurNAc-pentapeptide from UDP-MurNAc-pentapeptide onto the lipid carrier undecaprenyl phosphate, yielding undecaprenyl-pyrophosphoryl-MurNAc-pentapeptide, known as lipid I. The protein is Phospho-N-acetylmuramoyl-pentapeptide-transferase of Porphyromonas gingivalis (strain ATCC 33277 / DSM 20709 / CIP 103683 / JCM 12257 / NCTC 11834 / 2561).